Reading from the N-terminus, the 152-residue chain is Ribosome maturation factor RimP (152 aa).

The protein belongs to the RimP family.

The protein localises to the cytoplasm. In terms of biological role, required for maturation of 30S ribosomal subunits. The protein is Ribosome maturation factor RimP of Elusimicrobium minutum (strain Pei191).